Reading from the N-terminus, the 239-residue chain is MEPGLQQAGSCGAPSPDPAMQVQPGSVASPWRSTRPWRSTSRSYFYLSTTALVCLVVAVAIILVLVVQKKDSTPNTTEKAPLKGGNCSEDLFCTLKSTPSKKSWAYLQVSKHLNNTKLSWNEDGTIHGLIYQDGNLIVQFPGLYFIVCQLQFLVQCSNHSVDLTLQLLINSKIKKQTLVTVCESGVQSKNIYQNLSQFLLHYLQVNSTISVRVDNFQYVDTNTFPLDNVLSVFLYSSSD.

Residues 1–36 (MEPGLQQAGSCGAPSPDPAMQVQPGSVASPWRSTRP) form a disordered region. Over 1–43 (MEPGLQQAGSCGAPSPDPAMQVQPGSVASPWRSTRPWRSTSRS) the chain is Cytoplasmic. The chain crosses the membrane as a helical; Signal-anchor for type II membrane protein span at residues 44 to 67 (YFYLSTTALVCLVVAVAIILVLVV). Topologically, residues 68 to 239 (QKKDSTPNTT…LSVFLYSSSD (172 aa)) are extracellular. N-linked (GlcNAc...) asparagine glycosylation is found at Asn-75, Asn-86, Asn-114, Asn-158, Asn-194, and Asn-206. Residues 103–230 (SWAYLQVSKH…TNTFPLDNVL (128 aa)) enclose the THD domain. A disulfide bridge connects residues Cys-156 and Cys-182.

This sequence belongs to the tumor necrosis factor family. Homotrimer.

It is found in the membrane. Functionally, cytokine that binds to TNFRSF8/CD30. Induces proliferation of T-cells. The protein is Tumor necrosis factor ligand superfamily member 8 (Tnfsf8) of Mus musculus (Mouse).